The sequence spans 394 residues: 1-deoxy-D-xylulose 5-phosphate reductoisomerase (394 aa).

NADPH contacts are provided by threonine 10, glycine 11, serine 12, isoleucine 13, glycine 38, arginine 39, asparagine 40, and asparagine 123. Lysine 124 is a 1-deoxy-D-xylulose 5-phosphate binding site. Position 125 (glutamate 125) interacts with NADPH. Aspartate 149 is a binding site for Mn(2+). Residues serine 150, glutamate 151, serine 175, and histidine 198 each contribute to the 1-deoxy-D-xylulose 5-phosphate site. Position 151 (glutamate 151) interacts with Mn(2+). An NADPH-binding site is contributed by glycine 204. 1-deoxy-D-xylulose 5-phosphate is bound by residues serine 211, asparagine 216, lysine 217, and glutamate 220. Glutamate 220 serves as a coordination point for Mn(2+).

It belongs to the DXR family. The cofactor is Mg(2+). It depends on Mn(2+) as a cofactor.

It carries out the reaction 2-C-methyl-D-erythritol 4-phosphate + NADP(+) = 1-deoxy-D-xylulose 5-phosphate + NADPH + H(+). It functions in the pathway isoprenoid biosynthesis; isopentenyl diphosphate biosynthesis via DXP pathway; isopentenyl diphosphate from 1-deoxy-D-xylulose 5-phosphate: step 1/6. Functionally, catalyzes the NADPH-dependent rearrangement and reduction of 1-deoxy-D-xylulose-5-phosphate (DXP) to 2-C-methyl-D-erythritol 4-phosphate (MEP). The polypeptide is 1-deoxy-D-xylulose 5-phosphate reductoisomerase (Cereibacter sphaeroides (strain KD131 / KCTC 12085) (Rhodobacter sphaeroides)).